We begin with the raw amino-acid sequence, 169 residues long: MTDRTQPHTVQVHTTAGRFGDTAAGTNRYPDRGPSTSKVIAVITGLPIGGTLLLFAGLALAGTLLGLAVTTPLFILFSPVIVPAIIVVGLSVAGFLTSGACGLTGLSSFSWVMNYIRQTHGSVPEQLEMAKHRMADVAGYVGQKTKDVGQKTKEVGQEIQTKAQDSKRT.

The next 2 helical transmembrane spans lie at 39 to 59 and 73 to 93; these read VIAV…AGLA and LFIL…LSVA. A compositionally biased stretch (basic and acidic residues) spans 146–156; that stretch reads KDVGQKTKEVG. A disordered region spans residues 146–169; that stretch reads KDVGQKTKEVGQEIQTKAQDSKRT.

This sequence belongs to the oleosin family. As to expression, expressed in seeds (at protein level).

The protein localises to the lipid droplet. Its subcellular location is the membrane. Functionally, may have a structural role to stabilize the lipid body during desiccation of the seed by preventing coalescence of the oil. Probably interacts with both lipid and phospholipid moieties of lipid bodies. May also provide recognition signals for specific lipase anchorage in lipolysis during seedling growth. In Arachis hypogaea (Peanut), this protein is Oleosin Ara h 10.0101.